A 97-amino-acid chain; its full sequence is Cystatin-A (97 aa).

Met-1 carries the post-translational modification N-acetylmethionine. Positions 46–50 match the Secondary area of contact motif; sequence QVVAG.

The protein belongs to the cystatin family.

It localises to the cytoplasm. This is an intracellular thiol proteinase inhibitor. This Mus musculus (Mouse) protein is Cystatin-A (Csta).